The sequence spans 309 residues: Protein FdhE homolog (309 aa).

This sequence belongs to the FdhE family.

It is found in the cytoplasm. Its function is as follows. Necessary for formate dehydrogenase activity. This Cronobacter sakazakii (strain ATCC BAA-894) (Enterobacter sakazakii) protein is Protein FdhE homolog.